The following is a 591-amino-acid chain: Calnexin (591 aa).

The first 20 residues, 1–20 (MEGKWLLCLLLVLGTAAIQA), serve as a signal peptide directing secretion. Over 21-482 (HDGHDDDMID…QMLEAAEERP (462 aa)) the chain is Lumenal. Positions 75 and 118 each coordinate Ca(2+). Residue lysine 138 is modified to N6-acetyllysine. A disulfide bridge connects residues cysteine 161 and cysteine 195. Residues tyrosine 165, lysine 167, tyrosine 186, and aspartate 193 each contribute to the an alpha-D-glucoside site. The tract at residues 261-347 (GNLLNDMTPP…EKPEDWDEDM (87 aa)) is disordered. The span at 275–320 (REIEDPEDRKPEDWDERPKIADPDAVKPDDWDEDAPSKIPDEEATK) shows a compositional bias: basic and acidic residues. The segment at 277–410 (IEDPEDRKPE…RKIPNPDFFE (134 aa)) is p domain (Extended arm). 5 consecutive repeat copies span residues 279–291 (DPED…WDER), 296–308 (DPDA…WDED), 315–327 (DEEA…WLDD), 334–346 (DPDA…WDED), and 349–359 (GEWEAPQIANP). 4 X approximate repeats stretches follow at residues 279 to 346 (DPED…WDED) and 349 to 406 (GEWE…IPNP). Over residues 324-347 (WLDDEPEYIPDPDAEKPEDWDEDM) the composition is skewed to acidic residues. The interval 327–360 (DEPEYIPDPDAEKPEDWDEDMDGEWEAPQIANPK) is interaction with PPIB. A disulfide bond links cysteine 361 and cysteine 367. Tandem repeats lie at residues 368–378 (GVWQRPMIDNP), 382–392 (GKWKPPMIDNP), and 396–406 (GIWKPRKIPNP). Glutamate 426 is an an alpha-D-glucoside binding site. Aspartate 437 provides a ligand contact to Ca(2+). Residues 483–503 (WLWVVYILTVALPVFLVILFC) form a helical membrane-spanning segment. Residues cysteine 503 and cysteine 504 are each lipidated (S-palmitoyl cysteine). Over 504–591 (CSGKKQSNAM…SPRNRKPRRE (88 aa)) the chain is Cytoplasmic. Positions 504–591 (CSGKKQSNAM…SPRNRKPRRE (88 aa)) are sufficient to mediate interaction with SGIP1. The span at 514-538 (EYKKTDAPQPDVKDEEGKEEEKNKG) shows a compositional bias: basic and acidic residues. Residues 514-591 (EYKKTDAPQP…SPRNRKPRRE (78 aa)) form a disordered region. Position 553 is a phosphoserine (serine 553). Over residues 555 to 568 (AEEDGGTGSQDEED) the composition is skewed to acidic residues. Phosphothreonine is present on threonine 561. Phosphoserine; by MAPK3 is present on serine 563. A Phosphoserine modification is found at serine 582.

Belongs to the calreticulin family. In terms of assembly, interacts with MAPK3/ERK1. Interacts with KCNH2. Associates with ribosomes. Interacts with SGIP1; involved in negative regulation of endocytosis. The palmitoylated form interacts with the ribosome-translocon complex component SSR1, promoting efficient folding of glycoproteins. Interacts with SERPINA2P/SERPINA2 and with the S and Z variants of SERPINA1. Interacts with PPIB. Interacts with ZNRF4. Interacts with SMIM22. Interacts with TMX2. Interacts with TMEM35A/NACHO and CHRNA7. Interacts with reticulophagy regulators RETREG2 and RETREG3. Interacts with DNM1L; may form part of a larger protein complex at the ER-mitochondrial interface during mitochondrial fission. Interacts with ADAM7. In terms of processing, phosphorylated at Ser-563 by MAPK3/ERK1. Phosphorylation by MAPK3/ERK1 increases its association with ribosomes. Post-translationally, palmitoylation by DHHC6 leads to the preferential localization to the perinuclear rough ER. It mediates the association of calnexin with the ribosome-translocon complex (RTC) which is required for efficient folding of glycosylated proteins. Ubiquitinated, leading to proteasomal degradation. Probably ubiquitinated by ZNRF4.

The protein localises to the endoplasmic reticulum membrane. It localises to the mitochondrion membrane. It is found in the melanosome membrane. Its function is as follows. Calcium-binding protein that interacts with newly synthesized monoglucosylated glycoproteins in the endoplasmic reticulum. It may act in assisting protein assembly and/or in the retention within the ER of unassembled protein subunits. It seems to play a major role in the quality control apparatus of the ER by the retention of incorrectly folded proteins. Associated with partial T-cell antigen receptor complexes that escape the ER of immature thymocytes, it may function as a signaling complex regulating thymocyte maturation. Additionally it may play a role in receptor-mediated endocytosis at the synapse. The protein is Calnexin (Canx) of Rattus norvegicus (Rat).